The sequence spans 238 residues: MPINIRRATINDIICMQNANLHNLPENYMMKYYMYHILSWPEASFVATTTTLDCEDSDEQDENDKLELTLDGTNDGRTIKLDPTYLAPGEKLVGYVLVKMNDDPDQQNEPPNGHITSLSVMRTYRRMGIAENLMRQALFALREVHQAEYVSLHVRQSNRAALHLYRDTLAFEVLSIEKSYYQDGEDAYAMKKVLKLEELQISNFTHRRLKENEEKLEDDLESDLLEDIIKQGVNDIIV.

One can recognise an N-acetyltransferase domain in the interval 35 to 195 (YHILSWPEAS…DAYAMKKVLK (161 aa)).

This sequence belongs to the acetyltransferase family. ARD1 subfamily. Component of the N-terminal acetyltransferase A (NatA) complex, which is composed of ARD1, NAT1 and NAT5. Can self-associate.

Its subcellular location is the cytoplasm. It carries out the reaction N-terminal glycyl-[protein] + acetyl-CoA = N-terminal N(alpha)-acetylglycyl-[protein] + CoA + H(+). The catalysed reaction is N-terminal L-alanyl-[protein] + acetyl-CoA = N-terminal N(alpha)-acetyl-L-alanyl-[protein] + CoA + H(+). The enzyme catalyses N-terminal L-seryl-[protein] + acetyl-CoA = N-terminal N(alpha)-acetyl-L-seryl-[protein] + CoA + H(+). It catalyses the reaction N-terminal L-valyl-[protein] + acetyl-CoA = N-terminal N(alpha)-acetyl-L-valyl-[protein] + CoA + H(+). It carries out the reaction N-terminal L-cysteinyl-[protein] + acetyl-CoA = N-terminal N(alpha)-acetyl-L-cysteinyl-[protein] + CoA + H(+). The catalysed reaction is N-terminal L-threonyl-[protein] + acetyl-CoA = N-terminal N(alpha)-acetyl-L-threonyl-[protein] + CoA + H(+). Its function is as follows. Catalytic component of the NatA N-terminal acetyltransferase, which catalyzes acetylation of proteins beginning with Met-Ser, Met-Gly and Met-Ala. N-acetylation plays a role in normal eukaryotic translation and processing, protect against proteolytic degradation and protein turnover. The polypeptide is N-terminal acetyltransferase A complex catalytic subunit ARD1 (ARD1) (Saccharomyces cerevisiae (strain ATCC 204508 / S288c) (Baker's yeast)).